A 1396-amino-acid polypeptide reads, in one-letter code: Sterol 3-beta-glucosyltransferase (1396 aa).

A compositionally biased stretch (basic and acidic residues) spans 1–16 (MRPFIDDAKRRAERRL). 4 disordered regions span residues 1-21 (MRPF…ASRQ), 40-64 (DADD…MQYM), 83-196 (ARFD…RAAP), and 209-232 (ETEN…KKSQ). The span at 94–107 (ETRTRPRFLSEKPF) shows a compositional bias: basic and acidic residues. Over residues 186 to 196 (RPRSATPRAAP) the composition is skewed to low complexity. In terms of domain architecture, GRAM 1 spans 238–273 (RQLMEMFRFPTPEKVVVEYACSLLQSMLLQGYMYVT). In terms of domain architecture, PH spans 289 to 388 (RVIKSGYIYK…WVRALQKVIF (100 aa)). 2 disordered regions span residues 460–532 (GTPT…SSSS) and 571–627 (TIHT…ESKD). Polar residues-rich tracts occupy residues 484-532 (GSQN…SSSS) and 571-584 (TIHT…GTAR). Residues 588–602 (RHSDEITRSTTEHGL) are compositionally biased toward basic and acidic residues. In terms of domain architecture, GRAM 2 spans 717–783 (ERFRAHFALP…HDIENVEKEK (67 aa)). S905, R906, D908, A1208, H1210, H1223, G1227, T1228, D1247, and Q1248 together coordinate UDP-alpha-D-glucose. Positions 1324–1343 (SSISSTPFSPTPSTKTSDDQ) are enriched in low complexity. The segment at 1324-1346 (SSISSTPFSPTPSTKTSDDQNAN) is disordered.

The protein belongs to the glycosyltransferase 28 family.

It localises to the cytoplasm. The protein localises to the preautophagosomal structure membrane. It carries out the reaction a sterol + UDP-alpha-D-glucose = a sterol 3-beta-D-glucoside + UDP + H(+). The enzyme catalyses ergosterol + UDP-alpha-D-glucose = ergosteryl 3-beta-D-glucoside + UDP + H(+). In terms of biological role, sterol glycosyltransferase responsible for the glycosylation of ergosterol to form ergosterol-glucoside. The chain is Sterol 3-beta-glucosyltransferase from Emericella nidulans (strain FGSC A4 / ATCC 38163 / CBS 112.46 / NRRL 194 / M139) (Aspergillus nidulans).